Here is a 518-residue protein sequence, read N- to C-terminus: E3 ubiquitin-protein ligase TRIM39 (518 aa).

The RING-type zinc-finger motif lies at 29 to 70 (CSVCLEYLKEPVIIECGHNFCKACITRWWEDLERDFPCPVCR). A B box-type zinc finger spans residues 102 to 143 (RDESLCPQHHEALSLFCYEDQEAVCLICAISHTHRAHTVVPL). Positions 107, 110, 129, and 135 each coordinate Zn(2+). Residues 181-250 (ELKRLVESRR…AHLAAEVEGK (70 aa)) adopt a coiled-coil conformation. Interaction with CDKN1A regions lie at residues 268–337 (KNIP…QLIA) and 389–518 (TSGR…TDWE). The 196-residue stretch at 319–514 (SNFPRQYFAL…NAAPLTIRPP (196 aa)) folds into the B30.2/SPRY domain.

This sequence belongs to the TRIM/RBCC family. Interacts with MOAP1. Interacts with CDKN1A. Post-translationally, autoubiquitinated.

Its subcellular location is the cytoplasm. The protein resides in the cytosol. It is found in the mitochondrion. It localises to the nucleus. It carries out the reaction S-ubiquitinyl-[E2 ubiquitin-conjugating enzyme]-L-cysteine + [acceptor protein]-L-lysine = [E2 ubiquitin-conjugating enzyme]-L-cysteine + N(6)-ubiquitinyl-[acceptor protein]-L-lysine.. It participates in protein modification; protein ubiquitination. In terms of biological role, E3 ubiquitin-protein ligase. May facilitate apoptosis by inhibiting APC/C-Cdh1-mediated poly-ubiquitination and subsequent proteasome-mediated degradation of the pro-apoptotic protein MOAP1. Regulates the G1/S transition of the cell cycle and DNA damage-induced G2 arrest by stabilizing CDKN1A/p21. Positively regulates CDKN1A/p21 stability by competing with DTL for CDKN1A/p21 binding, therefore disrupting DCX(DTL) E3 ubiquitin ligase complex-mediated CDKN1A/p21 ubiquitination and degradation. The sequence is that of E3 ubiquitin-protein ligase TRIM39 (TRIM39) from Pan troglodytes (Chimpanzee).